A 315-amino-acid polypeptide reads, in one-letter code: Putative steroid dehydrogenase 3 (315 aa).

47 to 76 is a binding site for NADP(+); the sequence is ASWAVITGGTDGIGKSFSFELAKRGFNIYI. Tyrosine 202 is an active-site residue.

It belongs to the short-chain dehydrogenases/reductases (SDR) family. 17-beta-HSD 3 subfamily.

In Caenorhabditis elegans, this protein is Putative steroid dehydrogenase 3 (stdh-3).